We begin with the raw amino-acid sequence, 461 residues long: Protein ultraspiracle homolog (461 aa).

Positions 1 to 112 (MSSVAKKDKR…NHPLSGSKHL (112 aa)) are modulating. The interval 26 to 51 (PAPHQQQSMPSSQPSNFLQPLATPST) is disordered. The span at 27–40 (APHQQQSMPSSQPS) shows a compositional bias: low complexity. Positions 41–51 (NFLQPLATPST) are enriched in polar residues. 2 consecutive NR C4-type zinc fingers follow at residues 113–133 (CSIC…CEGC) and 149–173 (CRED…YQKC). Positions 113 to 185 (CSICGDRASG…CGMKREAVQE (73 aa)) form a DNA-binding region, nuclear receptor. A hinge region spans residues 185–192 (EERQRAAR). Positions 203–452 (VQELSIERLL…SYIHDALRNH (250 aa)) constitute an NR LBD domain.

The protein belongs to the nuclear hormone receptor family. NR2 subfamily. Heterodimer of USP and ECR. Only the heterodimer is capable of high-affinity binding to ecdysone.

It is found in the nucleus. Receptor for ecdysone. May be an important modulator of insect metamorphosis. This is Protein ultraspiracle homolog (USP) from Manduca sexta (Tobacco hawkmoth).